A 1500-amino-acid polypeptide reads, in one-letter code: Copper-transporting ATPase 1 (1500 aa).

The Cytoplasmic segment spans residues 1 to 653; sequence MDPSMGVNSV…KREIRQWRRS (653 aa). HMA domains lie at 8–74 and 85–151; these read NSVT…FDAV and TDTL…LDTG. The Cu(+) site is built by threonine 18, cysteine 19, and cysteine 22. Threonine 152 is modified (phosphothreonine). An HMA 3 domain is found at 171–237; that stretch reads VVLKMKVEGM…QIEAMGFPAF (67 aa). Cu(+) is bound by residues cysteine 182 and cysteine 185. At serine 270 the chain carries Phosphoserine. In terms of domain architecture, HMA 4 spans 277-343; the sequence is STATFIIDGM…AIEAVSPGLY (67 aa). Cysteine 288 and cysteine 291 together coordinate Cu(+). A Phosphothreonine modification is found at threonine 327. Phosphoserine occurs at positions 339, 353, 357, and 362. 3 consecutive HMA domains span residues 377–443, 488–554, and 564–630; these read QETV…FDAT, SKCY…FGAT, and GVLE…FEAS. Cu(+)-binding residues include cysteine 388, cysteine 391, cysteine 499, cysteine 502, cysteine 575, and cysteine 578. Residues 654–675 traverse the membrane as a helical segment; the sequence is FLVSLFFCIPVMGLMIYMMVMD. The Extracellular portion of the chain corresponds to 676–714; that stretch reads HHFATLHHNQNMSKEEMINLHSSMFLERQILPGLSVMNL. Asparagine 686 is a glycosylation site (N-linked (GlcNAc...) asparagine). Residues 715 to 734 traverse the membrane as a helical segment; it reads LSFLLCVPVQFFGGWYFYIQ. At 735–741 the chain is on the cytoplasmic side; that stretch reads AYKALKH. A helical membrane pass occupies residues 742 to 762; the sequence is KTANMDVLIVLATTIAFAYSL. Topologically, residues 763–781 are extracellular; it reads IILLVAMYERAKVNPITFF. Residues 782–802 traverse the membrane as a helical segment; the sequence is DTPPMLFVFIALGRWLEHIAK. Residues 803-936 lie on the Cytoplasmic side of the membrane; it reads GKTSEALAKL…KAPIQQFADK (134 aa). A helical transmembrane segment spans residues 937–959; the sequence is LSGYFVPFIVFVSIATLLVWIVI. At 960-989 the chain is on the extracellular side; that stretch reads GFLNFEIVETYFPGYNRSISRTETIIRFAF. A glycan (N-linked (GlcNAc...) asparagine) is linked at asparagine 975. The helical transmembrane segment at 990–1011 threads the bilayer; that stretch reads QASITVLCIACPCSLGLATPTA. At 1012–1356 the chain is on the cytoplasmic side; the sequence is VMVGTGVGAQ…LSRKTVKRIR (345 aa). Residue aspartate 1044 is the 4-aspartylphosphate intermediate of the active site. Glutamate 1081 lines the ATP pocket. Threonine 1212 is subject to Phosphothreonine. The Mg(2+) site is built by aspartate 1301 and aspartate 1305. The chain crosses the membrane as a helical span at residues 1357-1374; that stretch reads INFVFALIYNLVGIPIAA. Over 1375 to 1385 the chain is Extracellular; that stretch reads GVFMPIGLVLQ. A helical transmembrane segment spans residues 1386–1405; that stretch reads PWMGSAAMAASSVSVVLSSL. The Cytoplasmic portion of the chain corresponds to 1406–1500; that stretch reads FLKLYRKPTY…DFREDDDTAL (95 aa). Phosphoserine occurs at positions 1430, 1432, 1460, 1463, and 1466. Residues 1467–1468 carry the Endocytosis signal motif; the sequence is LL. Residues serine 1469, serine 1473, serine 1476, and serine 1486 each carry the phosphoserine modification. A PDZD11-binding region spans residues 1486-1500; that stretch reads SLLVGDFREDDDTAL. Residues 1487–1488 carry the Endocytosis signal motif; that stretch reads LL.

It belongs to the cation transport ATPase (P-type) (TC 3.A.3) family. Type IB subfamily. Monomer. Interacts with PDZD11. Interacts with ATOX1 and COMMD1. Interacts with TYRP1. Directly interacts with SOD3; this interaction is copper-dependent and is required for SOD3 activity. As to expression, widely expressed including in heart, brain, lung, muscle, kidney, pancreas, and to a lesser extent placenta. Expressed in fibroblasts, aortic smooth muscle cells, aortic endothelial cells and umbilical vein endothelial cells (at protein level). Expressed in cerebellum and brain cortex.

It localises to the golgi apparatus. It is found in the trans-Golgi network membrane. Its subcellular location is the cell membrane. The protein localises to the melanosome membrane. The protein resides in the early endosome membrane. It localises to the cell projection. It is found in the axon. Its subcellular location is the dendrite. The protein localises to the postsynaptic density. The protein resides in the cytoplasm. It localises to the cytosol. It is found in the endoplasmic reticulum. It catalyses the reaction Cu(+)(in) + ATP + H2O = Cu(+)(out) + ADP + phosphate + H(+). Functionally, ATP-driven copper (Cu(+)) ion pump that plays an important role in intracellular copper ion homeostasis. Within a catalytic cycle, acquires Cu(+) ion from donor protein on the cytoplasmic side of the membrane and delivers it to acceptor protein on the lumenal side. The transfer of Cu(+) ion across the membrane is coupled to ATP hydrolysis and is associated with a transient phosphorylation that shifts the pump conformation from inward-facing to outward-facing state. Under physiological conditions, at low cytosolic copper concentration, it is localized at the trans-Golgi network (TGN) where it transfers Cu(+) ions to cuproenzymes of the secretory pathway. Upon elevated cytosolic copper concentrations, it relocalizes to the plasma membrane where it is responsible for the export of excess Cu(+) ions. May play a dual role in neuron function and survival by regulating cooper efflux and neuronal transmission at the synapse as well as by supplying Cu(+) ions to enzymes such as PAM, TYR and SOD3. In the melanosomes of pigmented cells, provides copper cofactor to TYR to form an active TYR holoenzyme for melanin biosynthesis. The sequence is that of Copper-transporting ATPase 1 from Homo sapiens (Human).